The chain runs to 128 residues: UPF0102 protein RPB_0420 (128 aa).

Belongs to the UPF0102 family.

This Rhodopseudomonas palustris (strain HaA2) protein is UPF0102 protein RPB_0420.